The chain runs to 439 residues: Glutamyl-tRNA reductase (439 aa).

Substrate is bound by residues 46 to 49, Ser111, 116 to 118, and Gln122; these read TCNR and EGE. The active-site Nucleophile is Cys47. 191–196 contacts NADP(+); sequence GTGAYA.

This sequence belongs to the glutamyl-tRNA reductase family. Homodimer.

The catalysed reaction is (S)-4-amino-5-oxopentanoate + tRNA(Glu) + NADP(+) = L-glutamyl-tRNA(Glu) + NADPH + H(+). The protein operates within porphyrin-containing compound metabolism; protoporphyrin-IX biosynthesis; 5-aminolevulinate from L-glutamyl-tRNA(Glu): step 1/2. In terms of biological role, catalyzes the NADPH-dependent reduction of glutamyl-tRNA(Glu) to glutamate 1-semialdehyde (GSA). In Clavibacter michiganensis subsp. michiganensis (strain NCPPB 382), this protein is Glutamyl-tRNA reductase.